We begin with the raw amino-acid sequence, 402 residues long: Phosphoglycerate kinase (402 aa).

Residues 24–26 (DFN), arginine 40, 63–66 (HFGR), arginine 122, and arginine 155 each bind substrate. Residues lysine 206, glycine 297, glutamate 328, and 357 to 360 (GGDS) contribute to the ATP site.

The protein belongs to the phosphoglycerate kinase family. Monomer.

It localises to the cytoplasm. The enzyme catalyses (2R)-3-phosphoglycerate + ATP = (2R)-3-phospho-glyceroyl phosphate + ADP. Its pathway is carbohydrate degradation; glycolysis; pyruvate from D-glyceraldehyde 3-phosphate: step 2/5. The protein is Phosphoglycerate kinase of Synechococcus sp. (strain CC9311).